We begin with the raw amino-acid sequence, 61 residues long: Small ribosomal subunit protein uS14 (61 aa).

Zn(2+) contacts are provided by Cys24, Cys27, Cys40, and Cys43.

The protein belongs to the universal ribosomal protein uS14 family. Zinc-binding uS14 subfamily. In terms of assembly, part of the 30S ribosomal subunit. Contacts proteins S3 and S10. Zn(2+) is required as a cofactor.

Its function is as follows. Binds 16S rRNA, required for the assembly of 30S particles and may also be responsible for determining the conformation of the 16S rRNA at the A site. The protein is Small ribosomal subunit protein uS14 of Thermotoga maritima (strain ATCC 43589 / DSM 3109 / JCM 10099 / NBRC 100826 / MSB8).